A 488-amino-acid polypeptide reads, in one-letter code: GTPase Der (488 aa).

2 consecutive EngA-type G domains span residues P3 to M166 and I200 to T373. GTP is bound by residues G9 to S16, D56 to I60, N118 to D121, G206 to S213, D253 to V257, and N318 to D321. The KH-like domain maps to R374–D458.

The protein belongs to the TRAFAC class TrmE-Era-EngA-EngB-Septin-like GTPase superfamily. EngA (Der) GTPase family. In terms of assembly, associates with the 50S ribosomal subunit.

GTPase that plays an essential role in the late steps of ribosome biogenesis. The protein is GTPase Der of Shewanella amazonensis (strain ATCC BAA-1098 / SB2B).